We begin with the raw amino-acid sequence, 253 residues long: Indole-3-glycerol phosphate synthase (253 aa).

The protein belongs to the TrpC family.

The catalysed reaction is 1-(2-carboxyphenylamino)-1-deoxy-D-ribulose 5-phosphate + H(+) = (1S,2R)-1-C-(indol-3-yl)glycerol 3-phosphate + CO2 + H2O. It functions in the pathway amino-acid biosynthesis; L-tryptophan biosynthesis; L-tryptophan from chorismate: step 4/5. The sequence is that of Indole-3-glycerol phosphate synthase from Bacillus thuringiensis (strain Al Hakam).